An 858-amino-acid chain; its full sequence is Leucine--tRNA ligase (858 aa).

Residues 42-52 (PYPSGNLHMGH) carry the 'HIGH' region motif. The segment covering 584–594 (NPNRSDSSRYI) has biased composition (polar residues). Positions 584–611 (NPNRSDSSRYIPSNLVDPNDPKDPETGE) are disordered. The 'KMSKS' region signature appears at 619–623 (TMSKS). Position 622 (lysine 622) interacts with ATP.

This sequence belongs to the class-I aminoacyl-tRNA synthetase family.

The protein localises to the cytoplasm. It carries out the reaction tRNA(Leu) + L-leucine + ATP = L-leucyl-tRNA(Leu) + AMP + diphosphate. This Cyanothece sp. (strain PCC 7425 / ATCC 29141) protein is Leucine--tRNA ligase.